We begin with the raw amino-acid sequence, 221 residues long: Glutathione S-transferase 1 (221 aa).

Positions 7–88 constitute a GST N-terminal domain; it reads QKMQLYSFSL…YLEEKFPENP (82 aa). Glutathione-binding positions include 17–22, V60, 72–73, Q112, and 116–118; these read SSCAWR, DS, and NLA. Residues 93–221 form the GST C-terminal domain; the sequence is DLQKRALNYQ…ISPMLDEAKS (129 aa).

The protein belongs to the GST superfamily. Zeta family.

It carries out the reaction RX + glutathione = an S-substituted glutathione + a halide anion + H(+). Functionally, conjugation of reduced glutathione to a wide number of exogenous and endogenous hydrophobic electrophiles. The sequence is that of Glutathione S-transferase 1 (GST1) from Dianthus caryophyllus (Carnation).